Here is a 102-residue protein sequence, read N- to C-terminus: Acid shock protein (102 aa).

An N-terminal signal peptide occupies residues 1–21; sequence MKKVLALVVAAAMGLSSAAFA. Positions 22-41 are enriched in low complexity; the sequence is AETATTPAPTATTTKAAPAK. Residues 22 to 58 constitute a propeptide that is removed on maturation; the sequence is AETATTPAPTATTTKAAPAKTTHHKKQHKAAPAQKAQ. A disordered region spans residues 22–102; that stretch reads AETATTPAPT…PAKPAAQPAA (81 aa). Residues 80-90 are compositionally biased toward basic residues; that stretch reads AAKKHARKHSH. Residues 91 to 102 are compositionally biased toward low complexity; the sequence is QQPAKPAAQPAA.

Belongs to the Asr family. In terms of processing, proteolytic processing gives rise to the active protein.

The protein resides in the periplasm. Its function is as follows. Required for growth and/or survival at acidic conditions. The polypeptide is Acid shock protein (Escherichia coli O127:H6 (strain E2348/69 / EPEC)).